A 771-amino-acid chain; its full sequence is Probable glycosyltransferase STELLO1 (771 aa).

Residues 1–23 form a disordered region; the sequence is MLVQDRAAPSPAKPPKSQIRELP. The Cytoplasmic portion of the chain corresponds to 1 to 50; the sequence is MLVQDRAAPSPAKPPKSQIRELPTHQQIRRRFSEPKNLDFSTWFSENLSR. Residues 51–71 traverse the membrane as a helical segment; that stretch reads IAVFSLLIVTIVAFFFLYNTT. At 72–771 the chain is on the lumenal side; sequence DTASLLCFQS…EGDPLLMELV (700 aa). N242 and N729 each carry an N-linked (GlcNAc...) asparagine glycan.

The protein belongs to the STELLO family. In terms of assembly, homo- and heterodimer with STL2. Interacts with CESA1, CESA3, CESA4, CESA6, CESA7 and CESA8, but not with GOT1. As to expression, expressed in cells that are expanding or producing secondary cell walls.

The protein localises to the golgi apparatus membrane. Its function is as follows. Probable glycosyltransferase regulating the assembly and trafficking of cellulose synthase complexes. The chain is Probable glycosyltransferase STELLO1 from Arabidopsis thaliana (Mouse-ear cress).